The sequence spans 644 residues: 1-deoxy-D-xylulose-5-phosphate synthase (644 aa).

Thiamine diphosphate is bound by residues His72 and Gly113–Ala115. Asp144 lines the Mg(2+) pocket. Thiamine diphosphate contacts are provided by residues Gly145–Ala146, Asn174, Tyr287, and Glu370. Asn174 lines the Mg(2+) pocket.

Belongs to the transketolase family. DXPS subfamily. As to quaternary structure, homodimer. The cofactor is Mg(2+). It depends on thiamine diphosphate as a cofactor.

The enzyme catalyses D-glyceraldehyde 3-phosphate + pyruvate + H(+) = 1-deoxy-D-xylulose 5-phosphate + CO2. Its pathway is metabolic intermediate biosynthesis; 1-deoxy-D-xylulose 5-phosphate biosynthesis; 1-deoxy-D-xylulose 5-phosphate from D-glyceraldehyde 3-phosphate and pyruvate: step 1/1. In terms of biological role, catalyzes the acyloin condensation reaction between C atoms 2 and 3 of pyruvate and glyceraldehyde 3-phosphate to yield 1-deoxy-D-xylulose-5-phosphate (DXP). In Prochlorococcus marinus (strain MIT 9313), this protein is 1-deoxy-D-xylulose-5-phosphate synthase.